The primary structure comprises 850 residues: Bifunctional uridylyltransferase/uridylyl-removing enzyme (850 aa).

Residues Met1 to Pro317 are uridylyltransferase. The tract at residues Ile318–Ile673 is uridylyl-removing. The 123-residue stretch at Val436 to Leu558 folds into the HD domain. ACT domains lie at Gln674 to Pro755 and Val783 to Gly850.

It belongs to the GlnD family. Mg(2+) serves as cofactor.

The catalysed reaction is [protein-PII]-L-tyrosine + UTP = [protein-PII]-uridylyl-L-tyrosine + diphosphate. It carries out the reaction [protein-PII]-uridylyl-L-tyrosine + H2O = [protein-PII]-L-tyrosine + UMP + H(+). Uridylyltransferase (UTase) activity is inhibited by glutamine, while glutamine activates uridylyl-removing (UR) activity. Modifies, by uridylylation and deuridylylation, the PII regulatory proteins (GlnB and homologs), in response to the nitrogen status of the cell that GlnD senses through the glutamine level. Under low glutamine levels, catalyzes the conversion of the PII proteins and UTP to PII-UMP and PPi, while under higher glutamine levels, GlnD hydrolyzes PII-UMP to PII and UMP (deuridylylation). Thus, controls uridylylation state and activity of the PII proteins, and plays an important role in the regulation of nitrogen assimilation and metabolism. The polypeptide is Bifunctional uridylyltransferase/uridylyl-removing enzyme (Thiobacillus denitrificans (strain ATCC 25259 / T1)).